Reading from the N-terminus, the 316-residue chain is PHD finger protein 20-like protein 1 (316 aa).

Positions 11 to 71 (ITFEIGARLE…SNRLRPLERP (61 aa)) constitute a Tudor 1 domain. Glycyl lysine isopeptide (Lys-Gly) (interchain with G-Cter in SUMO2) cross-links involve residues Lys75 and Lys79. The 57-residue stretch at 85 to 141 (FDFKAGEEVLARWTDCRYYPAKIEAINKEGTFTVQFYDGVIRCLKRMHIKAMPEDAK) folds into the Tudor 2 domain. The tract at residues 183–237 (AKNKTGNKPRTSANSNKDKEKDERKWFKVPSKKEETSTSITTPEVEKKEDLPTSS) is disordered. Residues 186–197 (KTGNKPRTSANS) show a composition bias toward polar residues. Positions 198-218 (NKDKEKDERKWFKVPSKKEET) are enriched in basic and acidic residues.

Interacts with methylated DNMT1 (DNMT1K142me1). Interacts with SOX2.

The protein localises to the nucleus. Is a negative regulator of proteasomal degradation of a set of methylated proteins, including DNMT1 and SOX2. Involved in the maintainance of embryonic stem cells pluripotency, through the regulation of SOX2 levels. The sequence is that of PHD finger protein 20-like protein 1 (PHF20L1) from Bos taurus (Bovine).